The chain runs to 371 residues: NADP-dependent oxidoreductase lnaE (371 aa).

Residues 172–175, lysine 198, tyrosine 214, asparagine 237, 277–283, and 307–309 contribute to the NADP(+) site; these read DEIG, YGTIAEQ, and FGL.

The protein belongs to the NADP-dependent oxidoreductase L4BD family.

Its pathway is secondary metabolite biosynthesis. Functionally, NADP-dependent oxidoreductase; part of the lna gene cluster that mediates the biosynthesis of diastereomeric piperazines. Lna and lnb clusters encode sets of enzymes that produce overlapping sets of previously undescribed metabolites such as piperazinomycin-like metabolites or morpholine. The lna and lnb biosynthetic pathways appear to be part of a signaling network that controls the formation of sclerotia, a resilient overwintering structure. One primary function of the non-canonical nonribosomal peptide synthetases lnaA and lnbA consists in the reduction of L-tyrosine. The presence in the clusters of tailoring enzymes such as the oxidoreductases lnaB, lnbB, lnaE or lnbE, as well as of the cytochrome P450 monooxygenases lnaC, lnaD, or lnbC, might explain formation of various diastereomeric piperazines. This Aspergillus flavus (strain ATCC 200026 / FGSC A1120 / IAM 13836 / NRRL 3357 / JCM 12722 / SRRC 167) protein is NADP-dependent oxidoreductase lnaE.